The primary structure comprises 483 residues: BTB/POZ domain and ankyrin repeat-containing protein COCH (483 aa).

The region spanning 25–105 (SDVVFSVEGR…LYSGQVSIVP (81 aa)) is the BTB domain. Residues 111-125 (RPNCGDRGCWHTHCT) form a C2HC NPR-type zinc finger. 4 residues coordinate Zn(2+): Cys-114, Cys-119, His-121, and Cys-124. ANK repeat units follow at residues 249 to 278 (QKIR…LNLD), 279 to 308 (EALA…DVNF), 313 to 342 (TGKT…DPNV), and 346 to 380 (DGVT…KLRL). 2 disordered regions span residues 395 to 435 (EEGN…NSNM) and 450 to 483 (MSTS…SHDY). Positions 398–414 (NNNNNANNNNTGSSATN) are enriched in low complexity. Residues 456–465 (DSGDDDHNSN) are compositionally biased toward basic and acidic residues.

Belongs to the plant 'ANKYRIN-BTB/POZ' family. 'NOOT-BOP-COCH-like' (NBCL) subfamily. In terms of assembly, homodimer.

Its subcellular location is the nucleus. The protein resides in the cytoplasm. The protein localises to the cell membrane. The protein operates within protein modification; protein ubiquitination. Its function is as follows. May act as a substrate-specific adapter of an E3 ubiquitin-protein ligase complex (CUL3-RBX1-BTB) which mediates the ubiquitination and subsequent proteasomal degradation of target proteins. Transcriptional co-regulator involved in the promotion of leaf and floral meristem fate and determinacy. Promotes normal stipule growth and development. Required for the abscission of senescent organs, probably by regulating the cell wall disorganization in abscission zones (AZs, e.g. pulvini at the base of leaves). Down-regulates UNI expression in primordia of leaves and secondary inflorescences, and thereby controls their sizes and/or structures. Involved in the coordination of the symbiotic nodule developmental program. Promotes the formation of root nodules by interacting directly with APP1 to modulate the expression of the nuclear transcription factor Y subunit (NF-YA1), a key nodulin. Necessary for the robust maintenance of nodule identity throughout the nodule developmental program. This Pisum sativum (Garden pea) protein is BTB/POZ domain and ankyrin repeat-containing protein COCH.